Reading from the N-terminus, the 338-residue chain is DNA-directed RNA polymerase subunit alpha (338 aa).

The tract at residues 1 to 234 (MIHKNWAELI…DQLSIFVNFD (234 aa)) is alpha N-terminal domain (alpha-NTD). The tract at residues 250–338 (FNPLLLKKVD…DLAKKFEDAF (89 aa)) is alpha C-terminal domain (alpha-CTD).

Belongs to the RNA polymerase alpha chain family. As to quaternary structure, homodimer. The RNAP catalytic core consists of 2 alpha, 1 beta, 1 beta' and 1 omega subunit. When a sigma factor is associated with the core the holoenzyme is formed, which can initiate transcription.

It carries out the reaction RNA(n) + a ribonucleoside 5'-triphosphate = RNA(n+1) + diphosphate. Its function is as follows. DNA-dependent RNA polymerase catalyzes the transcription of DNA into RNA using the four ribonucleoside triphosphates as substrates. This Ruegeria pomeroyi (strain ATCC 700808 / DSM 15171 / DSS-3) (Silicibacter pomeroyi) protein is DNA-directed RNA polymerase subunit alpha.